Here is an 88-residue protein sequence, read N- to C-terminus: Small ribosomal subunit protein uS15 (88 aa).

The protein belongs to the universal ribosomal protein uS15 family. As to quaternary structure, part of the 30S ribosomal subunit. Forms a bridge to the 50S subunit in the 70S ribosome, contacting the 23S rRNA.

In terms of biological role, one of the primary rRNA binding proteins, it binds directly to 16S rRNA where it helps nucleate assembly of the platform of the 30S subunit by binding and bridging several RNA helices of the 16S rRNA. Functionally, forms an intersubunit bridge (bridge B4) with the 23S rRNA of the 50S subunit in the ribosome. The sequence is that of Small ribosomal subunit protein uS15 from Leptospira biflexa serovar Patoc (strain Patoc 1 / Ames).